Here is a 280-residue protein sequence, read N- to C-terminus: 4-diphosphocytidyl-2-C-methyl-D-erythritol kinase (280 aa).

Lys-11 is a catalytic residue. Residue 95 to 105 coordinates ATP; that stretch reads PVGAGLGGGSS. Residue Asp-137 is part of the active site.

The protein belongs to the GHMP kinase family. IspE subfamily.

The enzyme catalyses 4-CDP-2-C-methyl-D-erythritol + ATP = 4-CDP-2-C-methyl-D-erythritol 2-phosphate + ADP + H(+). The protein operates within isoprenoid biosynthesis; isopentenyl diphosphate biosynthesis via DXP pathway; isopentenyl diphosphate from 1-deoxy-D-xylulose 5-phosphate: step 3/6. Catalyzes the phosphorylation of the position 2 hydroxy group of 4-diphosphocytidyl-2C-methyl-D-erythritol. The sequence is that of 4-diphosphocytidyl-2-C-methyl-D-erythritol kinase from Geobacter sp. (strain M21).